We begin with the raw amino-acid sequence, 119 residues long: Large ribosomal subunit protein uL18 (119 aa).

The interval L54–V76 is disordered.

Belongs to the universal ribosomal protein uL18 family. As to quaternary structure, part of the 50S ribosomal subunit; part of the 5S rRNA/L5/L18/L25 subcomplex. Contacts the 5S and 23S rRNAs.

Its function is as follows. This is one of the proteins that bind and probably mediate the attachment of the 5S RNA into the large ribosomal subunit, where it forms part of the central protuberance. In Salinibacter ruber (strain DSM 13855 / M31), this protein is Large ribosomal subunit protein uL18.